The following is a 158-amino-acid chain: 2-C-methyl-D-erythritol 2,4-cyclodiphosphate synthase (158 aa).

A divalent metal cation is bound by residues Asp9 and His11. 4-CDP-2-C-methyl-D-erythritol 2-phosphate contacts are provided by residues 9–11 (DAH) and 35–36 (HS). His43 is an a divalent metal cation binding site. Residues 57–59 (DIG), 62–66 (FPDTD), 133–136 (TTTE), Phe140, and Arg143 each bind 4-CDP-2-C-methyl-D-erythritol 2-phosphate.

It belongs to the IspF family. As to quaternary structure, homotrimer. A divalent metal cation is required as a cofactor.

It carries out the reaction 4-CDP-2-C-methyl-D-erythritol 2-phosphate = 2-C-methyl-D-erythritol 2,4-cyclic diphosphate + CMP. It participates in isoprenoid biosynthesis; isopentenyl diphosphate biosynthesis via DXP pathway; isopentenyl diphosphate from 1-deoxy-D-xylulose 5-phosphate: step 4/6. Its function is as follows. Involved in the biosynthesis of isopentenyl diphosphate (IPP) and dimethylallyl diphosphate (DMAPP), two major building blocks of isoprenoid compounds. Catalyzes the conversion of 4-diphosphocytidyl-2-C-methyl-D-erythritol 2-phosphate (CDP-ME2P) to 2-C-methyl-D-erythritol 2,4-cyclodiphosphate (ME-CPP) with a corresponding release of cytidine 5-monophosphate (CMP). This Methylococcus capsulatus (strain ATCC 33009 / NCIMB 11132 / Bath) protein is 2-C-methyl-D-erythritol 2,4-cyclodiphosphate synthase.